We begin with the raw amino-acid sequence, 264 residues long: Thymidylate synthase (264 aa).

Residue arginine 21 participates in dUMP binding. Histidine 51 is a binding site for (6R)-5,10-methylene-5,6,7,8-tetrahydrofolate. DUMP is bound at residue 126–127; the sequence is RR. Catalysis depends on cysteine 146, which acts as the Nucleophile. Residues 166-169, asparagine 177, and 207-209 contribute to the dUMP site; these read RSAD and HLY. Aspartate 169 provides a ligand contact to (6R)-5,10-methylene-5,6,7,8-tetrahydrofolate. Alanine 263 is a binding site for (6R)-5,10-methylene-5,6,7,8-tetrahydrofolate.

It belongs to the thymidylate synthase family. Bacterial-type ThyA subfamily. As to quaternary structure, homodimer.

The protein resides in the cytoplasm. The enzyme catalyses dUMP + (6R)-5,10-methylene-5,6,7,8-tetrahydrofolate = 7,8-dihydrofolate + dTMP. It participates in pyrimidine metabolism; dTTP biosynthesis. In terms of biological role, catalyzes the reductive methylation of 2'-deoxyuridine-5'-monophosphate (dUMP) to 2'-deoxythymidine-5'-monophosphate (dTMP) while utilizing 5,10-methylenetetrahydrofolate (mTHF) as the methyl donor and reductant in the reaction, yielding dihydrofolate (DHF) as a by-product. This enzymatic reaction provides an intracellular de novo source of dTMP, an essential precursor for DNA biosynthesis. The protein is Thymidylate synthase of Polynucleobacter asymbioticus (strain DSM 18221 / CIP 109841 / QLW-P1DMWA-1) (Polynucleobacter necessarius subsp. asymbioticus).